A 407-amino-acid polypeptide reads, in one-letter code: 1-deoxy-D-xylulose 5-phosphate reductoisomerase (407 aa).

6 residues coordinate NADPH: Thr25, Gly26, Ser27, Ile28, Asn53, and Asn136. Lys137 is a 1-deoxy-D-xylulose 5-phosphate binding site. Glu138 provides a ligand contact to NADPH. Position 162 (Asp162) interacts with Mn(2+). Residues Ser163, Glu164, Ser188, and His211 each coordinate 1-deoxy-D-xylulose 5-phosphate. Position 164 (Glu164) interacts with Mn(2+). Residue Gly217 coordinates NADPH. Ser224, Asn229, Lys230, and Glu233 together coordinate 1-deoxy-D-xylulose 5-phosphate. A Mn(2+)-binding site is contributed by Glu233.

The protein belongs to the DXR family. The cofactor is Mg(2+). Mn(2+) serves as cofactor.

It catalyses the reaction 2-C-methyl-D-erythritol 4-phosphate + NADP(+) = 1-deoxy-D-xylulose 5-phosphate + NADPH + H(+). Its pathway is isoprenoid biosynthesis; isopentenyl diphosphate biosynthesis via DXP pathway; isopentenyl diphosphate from 1-deoxy-D-xylulose 5-phosphate: step 1/6. Functionally, catalyzes the NADPH-dependent rearrangement and reduction of 1-deoxy-D-xylulose-5-phosphate (DXP) to 2-C-methyl-D-erythritol 4-phosphate (MEP). The protein is 1-deoxy-D-xylulose 5-phosphate reductoisomerase of Rhodopseudomonas palustris (strain HaA2).